A 655-amino-acid polypeptide reads, in one-letter code: SRSF protein kinase 1 (655 aa).

The tract at residues 1 to 57 is disordered; the sequence is MERKVLALQARKKRTKAKKDKAQRKPETQHRGSAPHSESDLPEQEEEILGSDDDEQE. The segment covering 10–22 has biased composition (basic residues); sequence ARKKRTKAKKDKA. A compositionally biased stretch (acidic residues) spans 40-57; it reads DLPEQEEEILGSDDDEQE. S51 is modified (phosphoserine; by CK2). Positions 80–653 constitute a Protein kinase domain; it reads YHVIRKLGWG…AAECLRHPWL (574 aa). ATP contacts are provided by residues 86–94 and K109; that span reads LGWGHFSTV. The Proton acceptor role is filled by D213. Disordered regions lie at residues 238–341 and 397–417; these read WQRS…QDQT and FLSS…CTPI. Positions 265-276 are enriched in basic residues; that stretch reads KNKKKKLKKKQK. Composition is skewed to basic and acidic residues over residues 277-288 and 304-318; these read RQAELLEKRMQE and NKQE…RPLK. Phosphoserine is present on residues S309, S311, and S333. Residue S555 is modified to Phosphoserine; by CK2.

Belongs to the protein kinase superfamily. CMGC Ser/Thr protein kinase family. As to quaternary structure, monomer. Found in a multisubunit complex containing seven proteins, named toposome, which separates entangled circular chromatin DNA during chromosome segregation. Interacts with HHV-1 ICP27 protein. Interacts with DNAJC8 and AHSA1/AHA1 and this mediates formation of a complex with the Hsp70 /Hsp90 machinery. Binds to IGF2BP1, SYNCRIP, HNRNPA2B1 and HNRNPC. Interacts with SAFB/SAFB1 and SAFB2 which inhibits its activity. Mg(2+) serves as cofactor.

The protein resides in the cytoplasm. Its subcellular location is the nucleus. It localises to the nucleoplasm. The protein localises to the nucleus matrix. It is found in the microsome. The protein resides in the nucleus speckle. Its subcellular location is the chromosome. It carries out the reaction L-seryl-[protein] + ATP = O-phospho-L-seryl-[protein] + ADP + H(+). The catalysed reaction is L-threonyl-[protein] + ATP = O-phospho-L-threonyl-[protein] + ADP + H(+). With respect to regulation, activated by phosphorylation on Ser-51 and Ser-555. Functionally, serine/arginine-rich protein-specific kinase which specifically phosphorylates its substrates at serine residues located in regions rich in arginine/serine dipeptides, known as RS domains and is involved in the phosphorylation of SR splicing factors and the regulation of splicing. Plays a central role in the regulatory network for splicing, controlling the intranuclear distribution of splicing factors in interphase cells and the reorganization of nuclear speckles during mitosis. Can influence additional steps of mRNA maturation, as well as other cellular activities, such as chromatin reorganization in somatic and sperm cells and cell cycle progression. Phosphorylates SFRS2, ZRSR2, LBR and PRM1. Phosphorylates SRSF1 using a directional (C-terminal to N-terminal) and a dual-track mechanism incorporating both processive phosphorylation (in which the kinase stays attached to the substrate after each round of phosphorylation) and distributive phosphorylation steps (in which the kinase and substrate dissociate after each phosphorylation event). The RS domain of SRSF1 binds first to a docking groove in the large lobe of the kinase domain of SRPK1. This induces certain structural changes in SRPK1 and/or RRM2 domain of SRSF1, allowing RRM2 to bind the kinase and initiate phosphorylation. The cycles continue for several phosphorylation steps in a processive manner (steps 1-8) until the last few phosphorylation steps (approximately steps 9-12). During that time, a mechanical stress induces the unfolding of the beta-4 motif in RRM2, which then docks at the docking groove of SRPK1. This also signals RRM2 to begin to dissociate, which facilitates SRSF1 dissociation after phosphorylation is completed. Can mediate hepatitis B virus (HBV) core protein phosphorylation. It plays a negative role in the regulation of HBV replication through a mechanism not involving the phosphorylation of the core protein but by reducing the packaging efficiency of the pregenomic RNA (pgRNA) without affecting the formation of the viral core particles. Can induce splicing of exon 10 in MAPT/TAU. The protein is SRSF protein kinase 1 of Pongo abelii (Sumatran orangutan).